Reading from the N-terminus, the 810-residue chain is MSEPTADAGDNSPSSTDTAPLDRVKAIALLPLRSYLVKFAVALLVILVIIAAGGFWVQADATATLEANTEQQLEQEAVSDATEIGDWLERNEQSVLIASNNPRLGFNTTAADKQAYVTQLVAAELDADRIADVHVADPTVGGASDARIVASTDEDARGTRVSADTHPWVDRTRSIGRDTVVSTNPYRTAGGQRVVSSMSVAADLTHVLVVEYTAGDLSDQFGAGIDGTFTQVVRPTSDATAVLFSDAGTDAVGQPYIPDRSQSEIPALDSATEQGQFTNTPTKDSVLDREYVAAYTTVPGKNWVVVKHAPSESAFALSNQIRTGILGFILVALVGVVLVGGTIGRNTAAAVQSLSAAAAEIEAGNYDVDVASSRRDEIGQLFASIGSMRDALVTQIDEAEAAREQATEAQQDAEAERERAEDARERAEDAKADAEALAAELEAQAERYSDVMAACADGDLTRRMPADDTDNEAMAAIAASFNEMLAQWEHTIIDIQEFADAVATASEEAEVGAADAERASGQVSESVQEIAGAADEQRNMLDTVSGEMTDLSAAIEEVAASADSVAEHSHQTAEIARDGEQTAEDAIERSLTVQEAIDATVQNVEALDDQMAEISEIVDLISDIAEQTNMLALNANIEAARADKSGDGFAVVADEVKDLAEETQESAGDIERRITEVQSQTTATVAEARAAEESMDAGIDAVEEVVDAFTAVSDHADETDTGVQEISDTTDDQAASTEEAVSMTEEVADLSDSTAGEAQSVSAAAEEQAASMSEISDSVESLSGQAEQLKALLSEFEVDADRDVTPTQTD.

The Cytoplasmic segment spans residues 1–38; the sequence is MSEPTADAGDNSPSSTDTAPLDRVKAIALLPLRSYLVK. Residues 39 to 59 form a helical membrane-spanning segment; the sequence is FAVALLVILVIIAAGGFWVQA. Topologically, residues 60 to 323 are extracellular; it reads DATATLEANT…AFALSNQIRT (264 aa). A helical membrane pass occupies residues 324–344; it reads GILGFILVALVGVVLVGGTIG. One can recognise an HAMP 1 domain in the interval 345–397; sequence RNTAAAVQSLSAAAAEIEAGNYDVDVASSRRDEIGQLFASIGSMRDALVTQID. Topologically, residues 345-810 are cytoplasmic; it reads RNTAAAVQSL…DRDVTPTQTD (466 aa). The disordered stretch occupies residues 403–427; the sequence is REQATEAQQDAEAERERAEDARERA. Basic and acidic residues predominate over residues 414–427; it reads EAERERAEDARERA. Residues 439–493 form the HAMP 2 domain; that stretch reads AELEAQAERYSDVMAACADGDLTRRMPADDTDNEAMAAIAASFNEMLAQWEHTII. In terms of domain architecture, Methyl-accepting transducer spans 512–748; sequence GAADAERASG…EAVSMTEEVA (237 aa). Glutamate methyl ester (Glu) is present on residues E556 and E739. Positions 751–784 are disordered; it reads SDSTAGEAQSVSAAAEEQAASMSEISDSVESLSG. Positions 755–774 are enriched in low complexity; sequence AGEAQSVSAAAEEQAASMSE. Polar residues predominate over residues 775 to 784; that stretch reads ISDSVESLSG.

Belongs to the methyl-accepting chemotaxis (MCP) protein family. Post-translationally, methylated by CheR.

Its subcellular location is the cell membrane. Its function is as follows. Mediates chemotaxis towards compatible osmolytes. Probably transduces the signal from the substrate-binding protein CosB to the histidine kinase CheA. The chain is Transducer protein CosT (cosT) from Halobacterium salinarum (strain ATCC 700922 / JCM 11081 / NRC-1) (Halobacterium halobium).